We begin with the raw amino-acid sequence, 2531 residues long: Serine/threonine-protein kinase ATR (2531 aa).

Positions 1490 to 2067 (LIVKVAETFG…MWQSAYLLRQ (578 aa)) constitute an FAT domain. A PI3K/PI4K catalytic domain is found at 2192-2512 (FSDKVKVLHS…VSQLASSLIE (321 aa)). The tract at residues 2198 to 2204 (VLHSNTK) is G-loop. Positions 2368 to 2376 (GLGDRHTKN) are catalytic loop. The interval 2387–2411 (HVDFDMIFNKGETLGTPELVPFRLT) is activation loop. One can recognise an FATC domain in the interval 2499–2531 (HPMQVSQLASSLIELATSEEKLSEMYLGWMATL).

This sequence belongs to the PI3/PI4-kinase family. ATM subfamily. Mn(2+) serves as cofactor.

The protein resides in the nucleus. It carries out the reaction L-seryl-[protein] + ATP = O-phospho-L-seryl-[protein] + ADP + H(+). The enzyme catalyses L-threonyl-[protein] + ATP = O-phospho-L-threonyl-[protein] + ADP + H(+). Its function is as follows. Serine/threonine protein kinase which activates checkpoint signaling upon genotoxic stresses such as ionizing radiation (IR), ultraviolet light (UV), or DNA replication stalling, thereby acting as a DNA damage sensor. Recognizes the substrate consensus sequence [ST]-Q. Phosphorylates various proteins, which collectively inhibits DNA replication and mitosis and promotes DNA repair and recombination. Prevents mitotic catastrophe by functioning in the S-phase checkpoint and cooperating with atm-1 in the checkpoint response to double-strand breaks (DSBs) after ionizing radiation (IR) to induce cell cycle arrest or apoptosis via the cep-1/p53 pathway. In response to ionizing radiation, probably required for the association between the brc-1-brd-1 heterodimer and rad-51 and let-70 in order to activate E3-ubiquitin ligase activity of the heterodimer and induce ubiquitination at DNA damage sites. The sequence is that of Serine/threonine-protein kinase ATR from Caenorhabditis elegans.